An 83-amino-acid polypeptide reads, in one-letter code: uncharacterized protein (83 aa).

3 helical membrane passes run 4-24 (AILSNYLYYPSILAFLFGVLM), 32-52 (IGNIFGYLILTVVIAYFLKAF), and 54-74 (YYDLLPLSCSYLSAVIGIIIG).

It is found in the cell membrane. This is an uncharacterized protein from Methanocaldococcus jannaschii (strain ATCC 43067 / DSM 2661 / JAL-1 / JCM 10045 / NBRC 100440) (Methanococcus jannaschii).